Reading from the N-terminus, the 276-residue chain is MHPAAEHSPLGKSSEYIATYTPSLLFPISRAAKWAELGLTAQTLPYQGVDFWNCYELSWLLPSGKPVVAIAEFSIPADSPNIIESKSFKLYLNSLNQTAFATVEQVQTTLEQDLSTAAGKPVGVRIRSLSDIEGEGVATLPGVCIDDLDITVSSYDRPQPELLCCDESQIIEESVHSHLLKSNCPVTSQPDWGSVVVEYRGAALDHSSLLAYIVSFRQHSDFHEQCVERIFLDLQRLLKPEKLTVYARYVRRGGLDINPYRSTETLDVNNRRLARQ.

Position 83 to 85 (83 to 85) interacts with substrate; it reads IES. 85–86 contacts NADPH; that stretch reads SK. Catalysis depends on cysteine 184, which acts as the Thioimide intermediate. The active-site Proton donor is aspartate 191. A substrate-binding site is contributed by 223-224; that stretch reads HE. Residue 252 to 253 coordinates NADPH; sequence RG.

It belongs to the GTP cyclohydrolase I family. QueF type 2 subfamily. In terms of assembly, homodimer.

It is found in the cytoplasm. The catalysed reaction is 7-aminomethyl-7-carbaguanine + 2 NADP(+) = 7-cyano-7-deazaguanine + 2 NADPH + 3 H(+). The protein operates within tRNA modification; tRNA-queuosine biosynthesis. Its function is as follows. Catalyzes the NADPH-dependent reduction of 7-cyano-7-deazaguanine (preQ0) to 7-aminomethyl-7-deazaguanine (preQ1). The polypeptide is NADPH-dependent 7-cyano-7-deazaguanine reductase (Pseudomonas savastanoi pv. phaseolicola (strain 1448A / Race 6) (Pseudomonas syringae pv. phaseolicola (strain 1448A / Race 6))).